Reading from the N-terminus, the 149-residue chain is Large ribosomal subunit protein bL9 (149 aa).

This sequence belongs to the bacterial ribosomal protein bL9 family.

Binds to the 23S rRNA. In Enterobacter sp. (strain 638), this protein is Large ribosomal subunit protein bL9.